The chain runs to 155 residues: Small ribosomal subunit protein uS7cz/uS7cy (155 aa).

It belongs to the universal ribosomal protein uS7 family. In terms of assembly, part of the 30S ribosomal subunit.

Its subcellular location is the plastid. The protein localises to the chloroplast. Functionally, one of the primary rRNA binding proteins, it binds directly to 16S rRNA where it nucleates assembly of the head domain of the 30S subunit. The chain is Small ribosomal subunit protein uS7cz/uS7cy (rps7-A) from Guizotia abyssinica (Niger).